A 336-amino-acid chain; its full sequence is Glycerol-3-phosphate dehydrogenase [NAD(P)+] (336 aa).

NADPH contacts are provided by serine 13, tryptophan 14, arginine 34, and lysine 108. Sn-glycerol 3-phosphate-binding residues include lysine 108, glycine 138, and serine 140. Alanine 142 is a binding site for NADPH. Positions 193, 246, 256, 257, and 258 each coordinate sn-glycerol 3-phosphate. The active-site Proton acceptor is the lysine 193. Arginine 257 is an NADPH binding site. 2 residues coordinate NADPH: valine 281 and glutamate 283.

This sequence belongs to the NAD-dependent glycerol-3-phosphate dehydrogenase family.

It localises to the cytoplasm. The enzyme catalyses sn-glycerol 3-phosphate + NAD(+) = dihydroxyacetone phosphate + NADH + H(+). It carries out the reaction sn-glycerol 3-phosphate + NADP(+) = dihydroxyacetone phosphate + NADPH + H(+). Its pathway is membrane lipid metabolism; glycerophospholipid metabolism. Its function is as follows. Catalyzes the reduction of the glycolytic intermediate dihydroxyacetone phosphate (DHAP) to sn-glycerol 3-phosphate (G3P), the key precursor for phospholipid synthesis. This Carboxydothermus hydrogenoformans (strain ATCC BAA-161 / DSM 6008 / Z-2901) protein is Glycerol-3-phosphate dehydrogenase [NAD(P)+].